The primary structure comprises 257 residues: uncharacterized protein (257 aa).

2 disordered regions span residues 1–178 and 194–248; these read MAMF…SYDS and AITK…LAGN. Residues 12–21 show a composition bias toward basic residues; that stretch reads SKLKKGRRKL. Residues 50 to 71 show a composition bias toward low complexity; the sequence is NTNSGSSSDGEDGLLTSSGSDS. Positions 72-94 are enriched in polar residues; the sequence is VFNSTDYFSTPEDSQNCTPSDVS. Positions 102-114 are enriched in basic and acidic residues; sequence LDFKPADVLHDSE. Over residues 115–126 the composition is skewed to polar residues; it reads NSTSPKFITSLV. Residues 127–136 are compositionally biased toward low complexity; that stretch reads SSDSENSGAD. Acidic residues predominate over residues 163–178; it reads ITSEEDCCVQEDSYDS.

It belongs to the herpesviridae BKRF4 family.

This is an uncharacterized protein from Saimiriine herpesvirus 2 (strain 11) (SaHV-2).